The following is a 427-amino-acid chain: uncharacterized protein (427 aa).

The protein belongs to the MG032/MG096/MG288 family.

This is an uncharacterized protein from Mycoplasma pneumoniae (strain ATCC 29342 / M129 / Subtype 1) (Mycoplasmoides pneumoniae).